Reading from the N-terminus, the 162-residue chain is Large ribosomal subunit protein bL17 (162 aa).

Residues 126–162 (KKEEVKTKSRRGGKAKKAEPTTEAPANTTEETTDSAE) are disordered. Residues 146-155 (TTEAPANTTE) are compositionally biased toward low complexity.

It belongs to the bacterial ribosomal protein bL17 family. As to quaternary structure, part of the 50S ribosomal subunit. Contacts protein L32.

The sequence is that of Large ribosomal subunit protein bL17 from Flavobacterium psychrophilum (strain ATCC 49511 / DSM 21280 / CIP 103535 / JIP02/86).